Here is a 127-residue protein sequence, read N- to C-terminus: Large ribosomal subunit protein bL17 (127 aa).

It belongs to the bacterial ribosomal protein bL17 family. In terms of assembly, part of the 50S ribosomal subunit. Contacts protein L32.

The protein is Large ribosomal subunit protein bL17 of Lactobacillus gasseri (strain ATCC 33323 / DSM 20243 / BCRC 14619 / CIP 102991 / JCM 1131 / KCTC 3163 / NCIMB 11718 / NCTC 13722 / AM63).